Reading from the N-terminus, the 396-residue chain is NADH-quinone oxidoreductase subunit D (396 aa).

This sequence belongs to the complex I 49 kDa subunit family. In terms of assembly, NDH-1 is composed of 14 different subunits. Subunits NuoB, C, D, E, F, and G constitute the peripheral sector of the complex.

The protein resides in the cell inner membrane. It carries out the reaction a quinone + NADH + 5 H(+)(in) = a quinol + NAD(+) + 4 H(+)(out). Its function is as follows. NDH-1 shuttles electrons from NADH, via FMN and iron-sulfur (Fe-S) centers, to quinones in the respiratory chain. The immediate electron acceptor for the enzyme in this species is believed to be ubiquinone. Couples the redox reaction to proton translocation (for every two electrons transferred, four hydrogen ions are translocated across the cytoplasmic membrane), and thus conserves the redox energy in a proton gradient. In Bartonella quintana (strain Toulouse) (Rochalimaea quintana), this protein is NADH-quinone oxidoreductase subunit D.